Here is an 827-residue protein sequence, read N- to C-terminus: Putative transcriptional regulatory protein C16G5.16 (827 aa).

Residues 16 to 42 constitute a DNA-binding region (zn(2)-C6 fungal-type); the sequence is CDECHRRKIKCDQRRPCSNCIAYNYEC. 3 disordered regions span residues 80 to 114, 158 to 193, and 794 to 827; these read LKLP…SSQD, TVPN…HKKP, and QPPS…KRTE. Over residues 102–112 the composition is skewed to basic and acidic residues; it reads KRSDSSKRSSS. Ser112 bears the Phosphoserine mark. Composition is skewed to low complexity over residues 159–179 and 811–827; these read VPNP…LSFP and SNNS…KRTE.

Belongs to the ASG1 family.

The protein resides in the cytoplasm. Its subcellular location is the nucleus. The protein is Putative transcriptional regulatory protein C16G5.16 of Schizosaccharomyces pombe (strain 972 / ATCC 24843) (Fission yeast).